A 112-amino-acid polypeptide reads, in one-letter code: Nucleoid-associated protein FTN_1196 (112 aa).

The segment at 1–27 (MNFDMSKLMQQAQKMQEQMKKAQQERE) is disordered. Residues 17–27 (EQMKKAQQERE) are compositionally biased toward basic and acidic residues.

It belongs to the YbaB/EbfC family. As to quaternary structure, homodimer.

It is found in the cytoplasm. The protein resides in the nucleoid. Binds to DNA and alters its conformation. May be involved in regulation of gene expression, nucleoid organization and DNA protection. This is Nucleoid-associated protein FTN_1196 from Francisella tularensis subsp. novicida (strain U112).